We begin with the raw amino-acid sequence, 917 residues long: Hexokinase HKDC1 (917 aa).

The mitochondrial-binding peptide (MBP) stretch occupies residues 1 to 20; the sequence is MFAVHLMAFYFSKLKEDQIK. Hexokinase domains lie at 16 to 458 and 464 to 905; these read EDQI…MVTA and QAQR…LITA. Residues arginine 30 and 84-89 each bind ATP; that span reads DLGGSK. The tract at residues 73-207 is hexokinase small subdomain 1; that stretch reads DGSENGEFLS…DMDVDILALV (135 aa). Residue 84 to 91 coordinates D-glucose 6-phosphate; the sequence is DLGGSKFR. D-glucose-binding positions include serine 155, 172–173, and 208–209; these read TK and ND. The tract at residues 208–447 is hexokinase large subdomain 1; it reads NDTVGTMMTC…CDVRFLLSES (240 aa). D-glucose 6-phosphate is bound by residues aspartate 209 and threonine 232. D-glucose is bound by residues asparagine 235, glutamate 260, and 291-294; that span reads QLFE. D-glucose 6-phosphate is bound at residue 413-415; that stretch reads DGT. An ATP-binding site is contributed by 425-426; the sequence is KR. D-glucose 6-phosphate is bound by residues serine 449 and 532-536; that span reads DLGGT. Residues 521-654 are hexokinase small subdomain 2; the sequence is DGTEKGKFLA…EFDLDIVAVV (134 aa). Position 532 to 537 (532 to 537) interacts with ATP; the sequence is DLGGTN. Residues 602-603, 619-620, and 655-656 each bind D-glucose; these read SF, TK, and ND. The tract at residues 655–894 is hexokinase large subdomain 2; sequence NDTVGTMMTC…CDVTFMLSED (240 aa). Residues aspartate 656 and threonine 679 each contribute to the D-glucose 6-phosphate site. Threonine 679 provides a ligand contact to ATP. Residues 681 to 682, glutamate 707, and glutamate 741 each bind D-glucose; that span reads SN. ATP contacts are provided by residues 746 to 747, 783 to 787, and 862 to 866; these read GM, TKFLS, and TLYKL. D-glucose 6-phosphate contacts are provided by residues 860–862 and serine 896; that span reads DGT.

The protein belongs to the hexokinase family. Widely expressed. Highly expressed in the brush border, surface epithelium and the myenteric plexus of the small and large intestines; the acinar centrocytes and interlobular ducts of the pancreas; and the alveolar macrophages in the lungs (at protein level). Present at moderate level in the thyroid follicular epithelium (at protein level).

It localises to the cytoplasm. Its subcellular location is the mitochondrion membrane. It is found in the photoreceptor inner segment. The enzyme catalyses a D-hexose + ATP = a D-hexose 6-phosphate + ADP + H(+). It catalyses the reaction D-glucose + ATP = D-glucose 6-phosphate + ADP + H(+). The protein operates within carbohydrate metabolism; hexose metabolism. It functions in the pathway carbohydrate degradation; glycolysis; D-glyceraldehyde 3-phosphate and glycerone phosphate from D-glucose: step 1/4. Functionally, catalyzes the phosphorylation of hexose to hexose 6-phosphate, although at very low level compared to other hexokinases. Has low glucose phosphorylating activity compared to other hexokinases. Involved in glucose homeostasis and hepatic lipid accumulation. Required to maintain whole-body glucose homeostasis during pregnancy; however additional evidences are required to confirm this role. In Homo sapiens (Human), this protein is Hexokinase HKDC1.